Here is a 221-residue protein sequence, read N- to C-terminus: Adenylate kinase (221 aa).

10–15 (GAGKGT) provides a ligand contact to ATP. The tract at residues 30–59 (STGDMLRAAVKAGTPLGLEAKRFMDAGELV) is NMP. Residues Thr-31, Arg-36, 57-59 (ELV), 85-88 (GFPR), and Gln-92 each bind AMP. The segment at 122-159 (GRRSHAASGRTYHVKFNPPKVEGLDDVTGEPLIQRDDD) is LID. ATP contacts are provided by residues Arg-123 and 132 to 133 (TY). Residues Arg-156 and Arg-167 each coordinate AMP. Position 207 (Gly-207) interacts with ATP.

It belongs to the adenylate kinase family. In terms of assembly, monomer.

The protein localises to the cytoplasm. The enzyme catalyses AMP + ATP = 2 ADP. It participates in purine metabolism; AMP biosynthesis via salvage pathway; AMP from ADP: step 1/1. Its function is as follows. Catalyzes the reversible transfer of the terminal phosphate group between ATP and AMP. Plays an important role in cellular energy homeostasis and in adenine nucleotide metabolism. In Paraburkholderia xenovorans (strain LB400), this protein is Adenylate kinase.